We begin with the raw amino-acid sequence, 583 residues long: Poly [ADP-ribose] polymerase 2 (583 aa).

Residues 1-77 form a disordered region; it reads MAARRRRSTG…GMPGRSWASK (77 aa). The tract at residues 1–103 is N-terminal region (NTR); the sequence is MAARRRRSTG…VDPECTAKVG (103 aa). Short sequence motifs (nuclear localization signal) lie at residues 21-22 and 35-40; these read KR and PAKKTR. K37 and K38 each carry N6-acetyllysine. Over residues 57–67 the composition is skewed to basic and acidic residues; sequence ANKDRTEDKQD. Residues 104–201 enclose the WGR domain; it reads KAHVYCEGND…EKFEKVPGKY (98 aa). Phosphoserine is present on residues S226 and S232. Positions 231 to 348 constitute a PARP alpha-helical domain; sequence ESQLDLRVQE…DIEIAIKLVK (118 aa). A PARP catalytic domain is found at 356 to 583; it reads HPLDQHYRNL…KVQFNFLQLW (228 aa). NAD(+)-binding positions include 428 to 430, G437, R444, and S470; that span reads HGS. The active-site For poly [ADP-ribose] polymerase activity is the E558.

This sequence belongs to the ARTD/PARP family. As to quaternary structure, component of a base excision repair (BER) complex, containing at least XRCC1, PARP1, POLB and LRIG3. Homo- and heterodimer with PARP1. Interacts (via the PARP catalytic domain) with HPF1. Interacts with core nucleosomes. Post-translationally, auto poly-ADP-ribosylated on serine residues, leading to dissociation of the PARP2-HPF1 complex from chromatin. Poly-ADP-ribosylated by PARP1. Acetylation reduces DNA binding and enzymatic activity. In terms of processing, proteolytically cleaved by caspase-8 (CASP8) in response to apoptosis, leading to its inactivation. As to expression, widely expressed, mainly in actively dividing tissues. The highest levels are in the brain, heart, pancreas, skeletal muscle and testis; also detected in kidney, liver, lung, placenta, ovary and spleen; levels are low in leukocytes, colon, small intestine, prostate and thymus.

It is found in the nucleus. The protein resides in the chromosome. It carries out the reaction NAD(+) + (ADP-D-ribosyl)n-acceptor = nicotinamide + (ADP-D-ribosyl)n+1-acceptor + H(+).. It catalyses the reaction L-seryl-[protein] + NAD(+) = O-(ADP-D-ribosyl)-L-seryl-[protein] + nicotinamide + H(+). The catalysed reaction is L-aspartyl-[protein] + NAD(+) = 4-O-(ADP-D-ribosyl)-L-aspartyl-[protein] + nicotinamide. The enzyme catalyses L-glutamyl-[protein] + NAD(+) = 5-O-(ADP-D-ribosyl)-L-glutamyl-[protein] + nicotinamide. ADP-ribosyltransferase activity is regulated via an allosteric activation mechanism. In absence of activation signal, PARP2 is autoinhibited by the PARP alpha-helical domain (also named HD region), which prevents effective NAD(+)-binding. Activity is highly stimulated by signals, which unfold the PARP alpha-helical domain, relieving autoinhibition. Poly-ADP-ribosyltransferase activity is tightly regulated and PARP2 is removed from damaged chromatin following initial poly-ADP-ribosylation of chromatin to avoid prolonged residence (trapping) that has cytotoxic consequences. CHD1L promotes PARP2 removal from chromatin. ADP-ribosyltransferase activity is inhibited by a number of PARP inhibitors (PARPi) compounds, that are used the treatment of breast or ovarian cancers that have defects in DNA repair by homologous recombination. PARPi molecules (niraparib, talazoparib, and, to a lesser extent, olaparib) also trap PARP2 at DNA damage sites. Poly-ADP-ribosyltransferase that mediates poly-ADP-ribosylation of proteins and plays a key role in DNA repair. Mediates glutamate, aspartate or serine ADP-ribosylation of proteins: the ADP-D-ribosyl group of NAD(+) is transferred to the acceptor carboxyl group of target residues and further ADP-ribosyl groups are transferred to the 2'-position of the terminal adenosine moiety, building up a polymer with an average chain length of 20-30 units. Serine ADP-ribosylation of proteins constitutes the primary form of ADP-ribosylation of proteins in response to DNA damage. Mediates glutamate and aspartate ADP-ribosylation of target proteins in absence of HPF1. Following interaction with HPF1, catalyzes serine ADP-ribosylation of target proteins; HPF1 conferring serine specificity by completing the PARP2 active site. PARP2 initiates the repair of double-strand DNA breaks: recognizes and binds DNA breaks within chromatin and recruits HPF1, licensing serine ADP-ribosylation of target proteins, such as histones, thereby promoting decompaction of chromatin and the recruitment of repair factors leading to the reparation of DNA strand breaks. HPF1 initiates serine ADP-ribosylation but restricts the polymerase activity of PARP2 in order to limit the length of poly-ADP-ribose chains. Specifically mediates formation of branched poly-ADP-ribosylation. Branched poly-ADP-ribose chains are specifically recognized by some factors, such as APLF. In addition to proteins, also able to ADP-ribosylate DNA: preferentially acts on 5'-terminal phosphates at DNA strand breaks termini in nicked duplex. In Homo sapiens (Human), this protein is Poly [ADP-ribose] polymerase 2.